Here is a 231-residue protein sequence, read N- to C-terminus: Augmin complex subunit dgt2 (231 aa).

A coiled-coil region spans residues 128–199 (QEADLSCDQK…VQTKAELLRG (72 aa)).

As to quaternary structure, component of the augmin complex composed of dgt2, dgt3, dgt4, dgt5, dgt6, msd1, msd5 and wac. The complex interacts directly or indirectly with microtubules and is required for centrosome-independent generation of spindle microtubules. dgt2 interacts directly with wac (via coiled coil). As to expression, in adult females, detected only in the abdomen with no expression in the head or thorax (at protein level).

It localises to the cytoplasm. It is found in the cytoskeleton. The protein resides in the spindle. The protein localises to the spindle pole. Its function is as follows. As part of the augmin complex, plays a role in centrosome-independent generation of spindle microtubules. The complex is required for mitotic spindle assembly through its involvement in localizing gamma-tubulin to spindle microtubules. dgt2 binds to microtubules in vitro. The sequence is that of Augmin complex subunit dgt2 from Drosophila melanogaster (Fruit fly).